The chain runs to 233 residues: Orotidine 5'-phosphate decarboxylase (233 aa).

Substrate is bound by residues Asp13, Lys35, 62-71, Thr122, Arg182, Gln191, Gly211, and Arg212; that span reads DLKFHDIPNT. The active-site Proton donor is the Lys64.

This sequence belongs to the OMP decarboxylase family. Type 1 subfamily. In terms of assembly, homodimer.

It carries out the reaction orotidine 5'-phosphate + H(+) = UMP + CO2. The protein operates within pyrimidine metabolism; UMP biosynthesis via de novo pathway; UMP from orotate: step 2/2. In terms of biological role, catalyzes the decarboxylation of orotidine 5'-monophosphate (OMP) to uridine 5'-monophosphate (UMP). The protein is Orotidine 5'-phosphate decarboxylase of Pseudomonas putida (strain W619).